Reading from the N-terminus, the 304-residue chain is Pyridoxal 5'-phosphate synthase subunit PdxS (304 aa).

Position 34 (Asp34) interacts with D-ribose 5-phosphate. Catalysis depends on Lys91, which acts as the Schiff-base intermediate with D-ribose 5-phosphate. A D-ribose 5-phosphate-binding site is contributed by Gly163. Residue Arg175 participates in D-glyceraldehyde 3-phosphate binding. Residues Gly224 and 245 to 246 contribute to the D-ribose 5-phosphate site; that span reads GS.

This sequence belongs to the PdxS/SNZ family. As to quaternary structure, in the presence of PdxT, forms a dodecamer of heterodimers.

It carries out the reaction aldehydo-D-ribose 5-phosphate + D-glyceraldehyde 3-phosphate + L-glutamine = pyridoxal 5'-phosphate + L-glutamate + phosphate + 3 H2O + H(+). The protein operates within cofactor biosynthesis; pyridoxal 5'-phosphate biosynthesis. Its function is as follows. Catalyzes the formation of pyridoxal 5'-phosphate from ribose 5-phosphate (RBP), glyceraldehyde 3-phosphate (G3P) and ammonia. The ammonia is provided by the PdxT subunit. Can also use ribulose 5-phosphate and dihydroxyacetone phosphate as substrates, resulting from enzyme-catalyzed isomerization of RBP and G3P, respectively. The sequence is that of Pyridoxal 5'-phosphate synthase subunit PdxS from Cutibacterium acnes (strain DSM 16379 / KPA171202) (Propionibacterium acnes).